The following is a 129-amino-acid chain: MSNVPAELKYSKEHEWLRKEADGTYTVGITEHAQELLGDMVFVDLPEVGATVSAGDDCAVAESVKAASDIYAPVSGEIVAVNDVLSDSPELVNSEPYAGGWIFKIKASDESELESLLDATAYEALLEDE.

Residues 24 to 106 (TYTVGITEHA…YAGGWIFKIK (83 aa)) enclose the Lipoyl-binding domain. Lys65 is modified (N6-lipoyllysine).

It belongs to the GcvH family. The glycine cleavage system is composed of four proteins: P, T, L and H. It depends on (R)-lipoate as a cofactor.

Functionally, the glycine cleavage system catalyzes the degradation of glycine. The H protein shuttles the methylamine group of glycine from the P protein to the T protein. The chain is Glycine cleavage system H protein from Shigella dysenteriae serotype 1 (strain Sd197).